A 167-amino-acid polypeptide reads, in one-letter code: ATP synthase subunit b (167 aa).

Residues 15 to 37 (FWQTVIFLVTLYLLSKFAWGPIM) form a helical membrane-spanning segment.

Belongs to the ATPase B chain family. F-type ATPases have 2 components, F(1) - the catalytic core - and F(0) - the membrane proton channel. F(1) has five subunits: alpha(3), beta(3), gamma(1), delta(1), epsilon(1). F(0) has three main subunits: a(1), b(2) and c(10-14). The alpha and beta chains form an alternating ring which encloses part of the gamma chain. F(1) is attached to F(0) by a central stalk formed by the gamma and epsilon chains, while a peripheral stalk is formed by the delta and b chains.

The protein localises to the cell inner membrane. F(1)F(0) ATP synthase produces ATP from ADP in the presence of a proton or sodium gradient. F-type ATPases consist of two structural domains, F(1) containing the extramembraneous catalytic core and F(0) containing the membrane proton channel, linked together by a central stalk and a peripheral stalk. During catalysis, ATP synthesis in the catalytic domain of F(1) is coupled via a rotary mechanism of the central stalk subunits to proton translocation. Functionally, component of the F(0) channel, it forms part of the peripheral stalk, linking F(1) to F(0). In Cytophaga hutchinsonii (strain ATCC 33406 / DSM 1761 / CIP 103989 / NBRC 15051 / NCIMB 9469 / D465), this protein is ATP synthase subunit b.